The primary structure comprises 228 residues: L-ribulose-5-phosphate 4-epimerase UlaF (228 aa).

Substrate is bound by residues 26–27, 43–44, and 72–73; these read GN, SG, and SS. Residues aspartate 74, histidine 93, and histidine 95 each contribute to the Zn(2+) site. Aspartate 118 acts as the Proton donor/acceptor in catalysis. Zn(2+) is bound at residue histidine 167. The active-site Proton donor/acceptor is tyrosine 225.

The protein belongs to the aldolase class II family. AraD/FucA subfamily. Requires Zn(2+) as cofactor.

It catalyses the reaction L-ribulose 5-phosphate = D-xylulose 5-phosphate. It participates in cofactor degradation; L-ascorbate degradation; D-xylulose 5-phosphate from L-ascorbate: step 4/4. Catalyzes the isomerization of L-ribulose 5-phosphate to D-xylulose 5-phosphate. Is involved in the anaerobic L-ascorbate utilization. The sequence is that of L-ribulose-5-phosphate 4-epimerase UlaF from Salmonella paratyphi A (strain ATCC 9150 / SARB42).